Consider the following 301-residue polypeptide: GTPase Era (301 aa).

One can recognise an Era-type G domain in the interval 6-173 (KSGFVAIVGR…LEQTNANLEI (168 aa)). Residues 14–21 (GRPNVGKS) form a G1 region. A GTP-binding site is contributed by 14–21 (GRPNVGKS). The tract at residues 40-44 (QTTRN) is G2. A G3 region spans residues 61 to 64 (DTPG). Residues 61-65 (DTPGI) and 123-126 (NKID) each bind GTP. The tract at residues 123–126 (NKID) is G4. The tract at residues 152-154 (ISA) is G5. Residues 204–282 (TREEVPHSVA…FLEVWVKVQK (79 aa)) enclose the KH type-2 domain.

This sequence belongs to the TRAFAC class TrmE-Era-EngA-EngB-Septin-like GTPase superfamily. Era GTPase family. As to quaternary structure, monomer.

It localises to the cytoplasm. Its subcellular location is the cell membrane. Functionally, an essential GTPase that binds both GDP and GTP, with rapid nucleotide exchange. Plays a role in 16S rRNA processing and 30S ribosomal subunit biogenesis and possibly also in cell cycle regulation and energy metabolism. The sequence is that of GTPase Era from Listeria monocytogenes serotype 4a (strain HCC23).